The following is a 434-amino-acid chain: Septin-7 (434 aa).

Position 27 is a phosphotyrosine (tyrosine 27). The region spanning 44–313 (RGFEFTLMVV…ENYRSRKLAA (270 aa)) is the Septin-type G domain. Positions 44–314 (RGFEFTLMVV…NYRSRKLAAV (271 aa)) are interaction with SEPTIN12. The G1 motif stretch occupies residues 54-61 (GESGLGKS). Residue 54 to 61 (GESGLGKS) coordinates GTP. Phosphoserine is present on serine 74. GTP is bound by residues threonine 87, glycine 113, and 192–200 (KADTLTPEE). The G3 motif stretch occupies residues 110–113 (DTPG). The interval 191 to 194 (AKAD) is G4 motif. Threonine 225 carries the phosphothreonine modification. The GTP site is built by glycine 247 and arginine 262. A coiled-coil region spans residues 329–434 (TKSPLAQMEE…EKNKKKGKIF (106 aa)). Residue serine 331 is modified to Phosphoserine. Lysine 370 is subject to N6-acetyllysine. The segment covering 377-407 (QRRHEQMKKNLEAQHKGLEEKRRQFEDEKAN) has biased composition (basic and acidic residues). Positions 377-434 (QRRHEQMKKNLEAQHKGLEEKRRQFEDEKANWEAQQRILEQQNSSRTLEKNKKKGKIF) are disordered. Serine 421 bears the Phosphoserine mark. Position 423 is a phosphothreonine (threonine 423).

The protein belongs to the TRAFAC class TrmE-Era-EngA-EngB-Septin-like GTPase superfamily. Septin GTPase family. Septins polymerize into heterooligomeric protein complexes that form filaments, and associate with cellular membranes, actin filaments and microtubules. GTPase activity is required for filament formation. Filaments are assembled from asymmetrical heterotrimers, composed of SEPTIN2, SEPTIN6 and SEPTIN7 that associate head-to-head to form a hexameric unit. Within the trimer, directly interacts with SEPTIN6, while interaction with SEPTIN2 seems indirect. In the absence of SEPTIN6, forms homodimers. Interacts directly with CENPE and links CENPE to septin filaments composed of SEPTIN2, SEPTIN6 and SEPTIN7. Interacts with SEPTIN5, SEPTIN8, SEPTIN9 and SEPTIN11. Component of a septin core octameric complex consisting of SEPTIN12, SEPTIN7, SEPTIN6 and SEPTIN2 or SEPTIN4 in the order 12-7-6-2-2-6-7-12 or 12-7-6-4-4-6-7-12 and located in the sperm annulus; the SEPTIN12:SEPTIN7 association is mediated by the respective GTP-binding domains.

Its subcellular location is the cytoplasm. The protein localises to the chromosome. It is found in the centromere. It localises to the kinetochore. The protein resides in the cytoskeleton. Its subcellular location is the spindle. The protein localises to the cleavage furrow. It is found in the midbody. It localises to the cilium axoneme. The protein resides in the cell projection. Its subcellular location is the cilium. The protein localises to the flagellum. Filament-forming cytoskeletal GTPase. Required for normal organization of the actin cytoskeleton. Required for normal progress through mitosis. Involved in cytokinesis. Required for normal association of CENPE with the kinetochore. Plays a role in ciliogenesis and collective cell movements. Forms a filamentous structure with SEPTIN12, SEPTIN6, SEPTIN2 and probably SEPTIN4 at the sperm annulus which is required for the structural integrity and motility of the sperm tail during postmeiotic differentiation. The sequence is that of Septin-7 from Pan troglodytes (Chimpanzee).